Consider the following 1936-residue polypeptide: Potassium channel K1 (1936 aa).

Helical transmembrane passes span 175-195 (IIILYIIMLEFGSMLISYILL), 598-618 (VWIIAILIRIILWCIVWLWAA), 643-663 (GYIECTFQWCGVLDYLFGLYF), 670-690 (YIFSFFSLIDFITTPVSSFIM), 701-721 (TYWFLILGPLRFLRLVRAEST), and 734-754 (IIIIGIIILSLAILFTFSGIM). Residues 772 to 788 (FVYFGVITMSTVGYGDY) constitute an intramembrane region (pore-forming). The helical transmembrane segment at 791-811 (VTPAGKCLTMFIIVTCFTFVG) threads the bilayer. Residues 1141–1185 (DTSSMINYKSKSRVNYKMVKGTKNEFIRNQNYNINSIYYANNDNM) adopt a coiled-coil conformation.

The protein localises to the membrane. The enzyme catalyses K(+)(in) = K(+)(out). Partially inhibited by Ba(2+) and quinine. Probably insensitive to tetraethylammonium (TEA). Its function is as follows. Likely a predominant potassium channel in the erythrocytic stages of parasites. Mediates transmembrane potassium transport. Required for the development of oocysts in the mosquito midgut. The chain is Potassium channel K1 from Plasmodium berghei (strain Anka).